The following is a 332-amino-acid chain: L-lactate dehydrogenase A chain (332 aa).

NAD(+) is bound by residues glycine 29–lysine 57 and arginine 99. The substrate site is built by arginine 106, asparagine 138, and arginine 169. Position 138 (asparagine 138) interacts with NAD(+). The active-site Proton acceptor is the histidine 193. Residue threonine 248 coordinates substrate.

This sequence belongs to the LDH/MDH superfamily. LDH family. Homotetramer.

The protein resides in the cytoplasm. The enzyme catalyses (S)-lactate + NAD(+) = pyruvate + NADH + H(+). It functions in the pathway fermentation; pyruvate fermentation to lactate; (S)-lactate from pyruvate: step 1/1. Its function is as follows. Interconverts simultaneously and stereospecifically pyruvate and lactate with concomitant interconversion of NADH and NAD(+). The sequence is that of L-lactate dehydrogenase A chain (LDHA) from Sceloporus woodi (Florida scrub lizard).